A 184-amino-acid polypeptide reads, in one-letter code: Peptide deformylase (184 aa).

Fe cation contacts are provided by C98 and H140. E141 is an active-site residue. H144 provides a ligand contact to Fe cation.

It belongs to the polypeptide deformylase family. It depends on Fe(2+) as a cofactor.

It catalyses the reaction N-terminal N-formyl-L-methionyl-[peptide] + H2O = N-terminal L-methionyl-[peptide] + formate. In terms of biological role, removes the formyl group from the N-terminal Met of newly synthesized proteins. Requires at least a dipeptide for an efficient rate of reaction. N-terminal L-methionine is a prerequisite for activity but the enzyme has broad specificity at other positions. The polypeptide is Peptide deformylase (Phocaeicola vulgatus (strain ATCC 8482 / DSM 1447 / JCM 5826 / CCUG 4940 / NBRC 14291 / NCTC 11154) (Bacteroides vulgatus)).